A 102-amino-acid polypeptide reads, in one-letter code: MLHIDELTFENEVLQSEKLVLVDFWAPWCGPCRMIGPILEEIAKEFNLKVVQVNTDENPNLATFYGIRSIPTLMLFKKGQRVDTVIGAVPKSILIHTINKYL.

The region spanning 2–102 (LHIDELTFEN…ILIHTINKYL (101 aa)) is the Thioredoxin domain. Active-site nucleophile residues include C29 and C32. Cysteines 29 and 32 form a disulfide.

The protein belongs to the thioredoxin family.

The protein localises to the plastid. The protein resides in the chloroplast. In terms of biological role, participates in various redox reactions through the reversible oxidation of its active center dithiol to a disulfide and catalyzes dithiol-disulfide exchange reactions. The protein is Thioredoxin (trxA) of Cyanidioschyzon merolae (strain NIES-3377 / 10D) (Unicellular red alga).